The following is a 159-amino-acid chain: Large ribosomal subunit protein uL11 (159 aa).

It belongs to the universal ribosomal protein uL11 family. Part of the ribosomal stalk of the 50S ribosomal subunit. Interacts with L10 and the large rRNA to form the base of the stalk. L10 forms an elongated spine to which L12 dimers bind in a sequential fashion forming a multimeric L10(L12)X complex.

In terms of biological role, forms part of the ribosomal stalk which helps the ribosome interact with GTP-bound translation factors. The chain is Large ribosomal subunit protein uL11 from Methanococcus maripaludis (strain C5 / ATCC BAA-1333).